Consider the following 700-residue polypeptide: Sex comb on midleg-like protein 2 (700 aa).

The tract at residues 1–33 is disordered; the sequence is MGQTVNEDSMDVKKENQEKTPQSSTSSVQRDDF. Residues 19–28 are compositionally biased toward polar residues; it reads KTPQSSTSSV. 2 MBT repeats span residues 33 to 131 and 139 to 240; these read FHWE…LQPP and SSWP…LQPP. Residues 253–281 are compositionally biased toward polar residues; sequence TESSPSEASQHSMQSPQKTTLILPTQQVR. 2 disordered regions span residues 253–320 and 466–550; these read TESS…EKPL and PFSS…SSLN. S256, S261, S267, S299, and S300 each carry phosphoserine. Residue T305 is modified to Phosphothreonine. Over residues 476-495 the composition is skewed to basic and acidic residues; it reads SSAEHDKNQSAKEDVTERQS. S499 carries the phosphoserine modification. T503 bears the Phosphothreonine mark. Position 511 is a phosphoserine (S511). K518 participates in a covalent cross-link: Glycyl lysine isopeptide (Lys-Gly) (interchain with G-Cter in SUMO2). Phosphoserine is present on S522. The span at 535-545 shows a compositional bias: basic and acidic residues; the sequence is PKEENLSEDSK. Residue K536 forms a Glycyl lysine isopeptide (Lys-Gly) (interchain with G-Cter in SUMO2) linkage. Residues S570, S583, S590, and S594 each carry the phosphoserine modification. The segment covering 575-584 has biased composition (polar residues); the sequence is RSVPGTTSSP. Residues 575-594 are disordered; the sequence is RSVPGTTSSPLVGDISPKSS. Residues K599 and K605 each participate in a glycyl lysine isopeptide (Lys-Gly) (interchain with G-Cter in SUMO2) cross-link. The 70-residue stretch at 631-700 folds into the SAM domain; that stretch reads WSVDEVIQFM…IEKLKEGKYS (70 aa).

The protein belongs to the SCM family. As to expression, highly expressed in placenta, thymus and testis. Detected at lower levels in brain, liver, skeletal muscle, pancreas and ovary.

It is found in the nucleus. Functionally, putative Polycomb group (PcG) protein. PcG proteins act by forming multiprotein complexes, which are required to maintain the transcriptionally repressive state of homeotic genes throughout development. This is Sex comb on midleg-like protein 2 (SCML2) from Homo sapiens (Human).